Here is a 583-residue protein sequence, read N- to C-terminus: Exonuclease 3'-5' domain-containing protein 2 (583 aa).

The Mitochondrial intermembrane segment spans residues 1–11; the sequence is MTRESAVATKR. Residues 12–29 form a helical membrane-spanning segment; it reads NWAILAAGVGLVYVLVRH. The Cytoplasmic portion of the chain corresponds to 30–583; the sequence is RHRLLCPLRR…AGLDAKIKET (554 aa). Residues 62–228 form the 3'-5' exonuclease domain; it reads TTQWVLNELK…AIYQKLCRDL (167 aa). A divalent metal cation is bound by residues D83, E85, and D213. The segment covering 266–281 has biased composition (polar residues); it reads GSGVTRSKGSTQSKSN. The interval 266 to 286 is disordered; that stretch reads GSGVTRSKGSTQSKSNKWVPK.

The protein belongs to the EXD2 family. In terms of assembly, homodimer. Mg(2+) is required as a cofactor. Requires Mn(2+) as cofactor.

The protein resides in the mitochondrion membrane. In terms of biological role, 3'-5' exoribonuclease required for mitochondrial metabolism. This Drosophila melanogaster (Fruit fly) protein is Exonuclease 3'-5' domain-containing protein 2.